Consider the following 96-residue polypeptide: MADEKPKEGVKTENNDHINLKVAGQDGSVVQFKIKRHTPLSKLMKAYCERQGLTMRQIRFRFDGQPINETDTPAQLEMEDEDTIDVFQQQTGGHRI.

Lys11 is covalently cross-linked (Glycyl lysine isopeptide (Lys-Gly) (interchain with G-Cter in SUMO)). The Ubiquitin-like domain occupies Asp16–Ile96. Gly93 participates in a covalent cross-link: Glycyl lysine isopeptide (Gly-Lys) (interchain with K-? in acceptor proteins). The propeptide occupies His94–Ile96.

Belongs to the ubiquitin family. SUMO subfamily. As to quaternary structure, interacts with sae2 and ube2i. Covalently attached to a number of proteins. In terms of processing, polymeric chains can be formed through Lys-11 cross-linking. Post-translationally, cleavage of precursor form by a sentrin-specific protease is necessary for function.

Its subcellular location is the nucleus. Its function is as follows. Ubiquitin-like protein that can be covalently attached to proteins as a monomer or as a lysine-linked polymer. Covalent attachment via an isopeptide bond to its substrates requires prior activation by the E1 complex sae1-sae2 and linkage to the E2 enzyme ube2i, and can be promoted by an E3 ligase such as pias1-4. This post-translational modification on lysine residues of proteins plays a crucial role in a number of cellular processes such as nuclear transport, DNA replication and repair, mitosis and signal transduction. Polymeric sumo2 chains are also susceptible to polyubiquitination which functions as a signal for proteasomal degradation of modified proteins. This Danio rerio (Zebrafish) protein is Small ubiquitin-related modifier 2.